Here is a 157-residue protein sequence, read N- to C-terminus: SsrA-binding protein (157 aa).

Belongs to the SmpB family.

The protein resides in the cytoplasm. Required for rescue of stalled ribosomes mediated by trans-translation. Binds to transfer-messenger RNA (tmRNA), required for stable association of tmRNA with ribosomes. tmRNA and SmpB together mimic tRNA shape, replacing the anticodon stem-loop with SmpB. tmRNA is encoded by the ssrA gene; the 2 termini fold to resemble tRNA(Ala) and it encodes a 'tag peptide', a short internal open reading frame. During trans-translation Ala-aminoacylated tmRNA acts like a tRNA, entering the A-site of stalled ribosomes, displacing the stalled mRNA. The ribosome then switches to translate the ORF on the tmRNA; the nascent peptide is terminated with the 'tag peptide' encoded by the tmRNA and targeted for degradation. The ribosome is freed to recommence translation, which seems to be the essential function of trans-translation. In Chlorobium chlorochromatii (strain CaD3), this protein is SsrA-binding protein.